A 2139-amino-acid polypeptide reads, in one-letter code: Voltage-dependent L-type calcium channel subunit alpha-1C (2139 aa).

A disordered region spans residues 1–20 (MVNENTRMYVPEENHQGSNY). Topologically, residues 1–124 (MVNENTRMYV…RACISIVEWK (124 aa)) are cytoplasmic. The calmodulin-binding stretch occupies residues 47-68 (GAALSWQAAIDAARQAKLMGSA). The segment at 73-98 (ISTVSSTQRKRQQYGKPKKQGGTTAT) is disordered. Basic residues predominate over residues 80 to 91 (QRKRQQYGKPKK). The I repeat unit spans residues 111–408 (NPIRRACISI…LVLGVLSGEF (298 aa)). Residues 125–143 (PFEIIILLTIFANCVALAI) traverse the membrane as a helical segment. The Extracellular segment spans residues 144–158 (YIPFPEDDSNATNSN). Asn-153 carries N-linked (GlcNAc...) asparagine glycosylation. A helical transmembrane segment spans residues 159 to 179 (LERVEYLFLIIFTVEAFLKVI). Topologically, residues 180–188 (AYGLLFHPN) are cytoplasmic. The chain crosses the membrane as a helical span at residues 189-209 (AYLRNGWNLLDFIIVVVGLFS). Topologically, residues 210-232 (AILEQATKADGANALGGKGAGFD) are extracellular. The chain crosses the membrane as a helical span at residues 233–251 (VKALRAFRVLRPLRLVSGV). Topologically, residues 252 to 268 (PSLQVVLNSIIKAMVPL) are cytoplasmic. The chain crosses the membrane as a helical span at residues 269-290 (LHIALLVLFVIIIYAIIGLELF). Over 291 to 350 (MGKMHKTCYNQEGIIDVPAEEDPSPCALETGHGRQCQNGTVCKPGWDGPKHGITNFDNFA) the chain is Extracellular. 2 cysteine pairs are disulfide-bonded: Cys-298–Cys-326 and Cys-316–Cys-332. Asn-328 carries an N-linked (GlcNAc...) asparagine glycan. The segment at residues 351–372 (FAMLTVFQCITMEGWTDVLYWM) is an intramembrane region (pore-forming). Positions 361-364 (TMEG) match the Selectivity filter of repeat I motif. Glu-363 lines the Ca(2+) pocket. At 373-380 (QDAMGYEL) the chain is on the extracellular side. The chain crosses the membrane as a helical span at residues 381–401 (PWVYFVSLVIFGSFFVLNLVL). Topologically, residues 402–524 (GVLSGEFSKE…RKCRAAVKSN (123 aa)) are cytoplasmic. The AID/alpha-interaction domain; mediates interaction with the beta subunit stretch occupies residues 428 to 445 (QQLEEDLKGYLDWITQAE). The interval 449–481 (PENEDEGMDEDKPRNMSMPTSETESVNTENVAG) is disordered. Residues 465–478 (SMPTSETESVNTEN) show a composition bias toward polar residues. The residue at position 469 (Ser-469) is a Phosphoserine. Residue Thr-476 is modified to Phosphothreonine. The II repeat unit spans residues 510-756 (NRFCRRKCRA…VFLAIAVDNL (247 aa)). Residues 525-543 (VFYWLVIFLVFLNTLTIAS) form a helical membrane-spanning segment. Residues 544-554 (EHYNQPHWLTE) lie on the Extracellular side of the membrane. Residues 555 to 575 (VQDTANKALLALFTAEMLLKM) traverse the membrane as a helical segment. Over 576-586 (YSLGLQAYFVS) the chain is Cytoplasmic. A helical transmembrane segment spans residues 587–606 (LFNRFDCFIVCGGILETILV). The Extracellular portion of the chain corresponds to 607–615 (ETKIMSPLG). A helical membrane pass occupies residues 616–634 (ISVLRCVRLLRIFKITRYW). At 635–653 (NSLSNLVASLLNSVRSIAS) the chain is on the cytoplasmic side. A helical membrane pass occupies residues 654 to 673 (LLLLLFLFIIIFSLLGMQLF). At 674 to 693 (GGKFNFDEMQTRRSTFDNFP) the chain is on the extracellular side. An intramembrane region (pore-forming) is located at residues 694-715 (QSLLTVFQILTGEDWNSVMYDG). A Selectivity filter of repeat II motif is present at residues 704–707 (TGED). Residue Glu-706 participates in Ca(2+) binding. At 716–725 (IMAYGGPSFP) the chain is on the extracellular side. The chain crosses the membrane as a helical span at residues 726–745 (GMLVCIYFIILFICGNYILL). At 746-900 (NVFLAIAVDN…LQCHRIVNDT (155 aa)) the chain is on the cytoplasmic side. Residues 764 to 861 (SAQKEEEEEK…EMPVGPRPRP (98 aa)) are disordered. Over residues 783 to 806 (SPEKKQEVMEKPAVEESKEEKIEL) the composition is skewed to basic and acidic residues. Phosphoserine occurs at positions 808 and 815. The interaction with STAC2 stretch occupies residues 829-876 (SENEDKSPHSNPDTAGEEDEEEPEMPVGPRPRPLSELHLKEKAVPMPE). Positions 843 to 852 (AGEEDEEEPE) are enriched in acidic residues. The III repeat unit spans residues 887–1169 (NRFRLQCHRI…IFVGFVIVTF (283 aa)). The chain crosses the membrane as a helical span at residues 901–919 (IFTNLILFFILLSSISLAA). At 920–931 (EDPVQHTSFRNH) the chain is on the extracellular side. A helical transmembrane segment spans residues 932–951 (ILGNADYVFTSIFTLEIILK). The Cytoplasmic portion of the chain corresponds to 952–967 (MTAYGAFLHKGSFCRN). The helical transmembrane segment at 968–986 (YFNILDLLVVSVSLISFGI) threads the bilayer. Residues 987-993 (QSSAINV) lie on the Extracellular side of the membrane. Residues 994 to 1012 (VKILRVLRVLRPLRAINRA) form a helical membrane-spanning segment. At 1013 to 1031 (KGLKHVVQCVFVAIRTIGN) the chain is on the cytoplasmic side. The chain crosses the membrane as a helical span at residues 1032-1051 (IVIVTTLLQFMFACIGVQLF). At 1052–1101 (KGKLYTCSDSSKQTEAECKGNYITYKDGEVDHPIIQPRSWENSKFDFDNV) the chain is on the extracellular side. Cys-1058 and Cys-1069 are joined by a disulfide. A dihydropyridine binding region spans residues 1089 to 1178 (RSWENSKFDF…FQEQGEQEYK (90 aa)). The pore-forming intramembrane region spans 1102–1122 (LAAMMALFTVSTFEGWPELLY). Residues 1113-1116 (TFEG) carry the Selectivity filter of repeat III motif. Glu-1115 contacts Ca(2+). Residues 1123-1139 (RSIDSHTEDKGPIYNYR) lie on the Extracellular side of the membrane. A helical transmembrane segment spans residues 1140-1161 (VEISIFFIIYIIIIAFFMMNIF). The Cytoplasmic segment spans residues 1162-1219 (VGFVIVTFQEQGEQEYKNCELDKNQRQCVEYALKARPLRRYIPKNQHQYKVWYVVNST). Residues 1206 to 1479 (NQHQYKVWYV…LFVAVIMDNF (274 aa)) form an IV repeat. A helical transmembrane segment spans residues 1220–1241 (YFEYLMFVLILLNTICLAMQHY). The Extracellular portion of the chain corresponds to 1242–1249 (GQSCLFKI). Residues 1250-1271 (AMNILNMLFTGLFTVEMILKLI) form a helical membrane-spanning segment. Over 1272-1281 (AFKPKGYFSD) the chain is Cytoplasmic. The helical transmembrane segment at 1282–1301 (PWNVFDFLIVIGSIIDVILS) threads the bilayer. The Extracellular segment spans residues 1302–1324 (ETNPAEHTQCSPSMSAEENSRIS). A helical membrane pass occupies residues 1325–1343 (ITFFRLFRVMRLVKLLSRG). Topologically, residues 1344-1361 (EGIRTLLWTFIKSFQALP) are cytoplasmic. Residues 1362–1382 (YVALLIVMLFFIYAVIGMQVF) form a helical membrane-spanning segment. Topologically, residues 1383-1404 (GKIALNDTTEINRNNNFQTFPQ) are extracellular. Asn-1388 carries an N-linked (GlcNAc...) asparagine glycan. Positions 1405–1423 (AVLLLFRCATGEAWQDIML) form an intramembrane region, pore-forming. The Selectivity filter of repeat IV motif lies at 1414-1417 (TGEA). The Extracellular portion of the chain corresponds to 1424–1451 (ACMPGKKCAPESEPSNSTEGETPCGSSF). The segment at 1430–1498 (KCAPESEPSN…LGPHHLDEFK (69 aa)) is dihydropyridine binding. The cysteines at positions 1431 and 1447 are disulfide-linked. Asn-1439 is a glycosylation site (N-linked (GlcNAc...) asparagine). The segment at 1444 to 1486 (ETPCGSSFAVFYFISFYMLCAFLIINLFVAVIMDNFDYLTRDW) is phenylalkylamine binding. A helical membrane pass occupies residues 1452 to 1476 (AVFYFISFYMLCAFLIINLFVAVIM). Residues 1477 to 2139 (DNFDYLTRDW…ADSRSYVSNL (663 aa)) lie on the Cytoplasmic side of the membrane. The segment at 1611–1638 (DEVTVGKFYATFLIQEYFRKFKKRKEQG) is important for interaction with STAC1, STAC2 and STAC3. Residues 1611-1644 (DEVTVGKFYATFLIQEYFRKFKKRKEQGLVGKPS) form a calmodulin-binding region. The tract at residues 1617–1637 (KFYATFLIQEYFRKFKKRKEQ) is calmodulin-binding IQ region. The important for localization in at the junctional membrane stretch occupies residues 1651 to 1670 (LQAGLRTLHDIGPEIRRAIS). Residues Ser-1670 and Ser-1691 each carry the phosphoserine modification. Polar residues-rich tracts occupy residues 1732–1741 (KTGNNQADTE) and 1751–1763 (STFTPSSYSSTGS). Residues 1732–1773 (KTGNNQADTESPSHEKLVDSTFTPSSYSSTGSNANINNANNT) are disordered. A compositionally biased stretch (low complexity) spans 1764 to 1773 (NANINNANNT). Ser-1897 carries the phosphoserine; by PKA modification. The disordered stretch occupies residues 1940–1966 (RSHSPTTFPRPCPTPPVTPGSRGRPLR). The segment covering 1947-1957 (FPRPCPTPPVT) has biased composition (pro residues).

Belongs to the calcium channel alpha-1 subunit (TC 1.A.1.11) family. CACNA1C subfamily. In terms of assembly, component of a calcium channel complex consisting of a pore-forming alpha subunit (CACNA1C) and ancillary beta, gamma and delta subunits. The channel complex contains alpha, beta, gamma and delta subunits in a 1:1:1:1 ratio, i.e. it contains only one of each type of subunit. CACNA1C channel activity is modulated by ancillary subunits, such as CACNB1, CACNB2, CACNB3, CACNA2D1 and CACNA2D4. Interacts with the gamma subunits CACNG4, CACNG6, CACNG7 and CACNG8. Interacts with CACNB1. Interacts with CACNB2. Identified in a complex with CACNA2D4 and CACNB3. Interacts with CACNB3. Interacts with CACNA2D1. Interacts with CACNA2D4. Interacts with CALM1. Interacts (via the N-terminus and the C-terminal C and IQ motifs) with CABP1; this inhibits Ca(2+)-dependent channel inactivation. The binding via the C motif is calcium independent whereas the binding via IQ requires the presence of calcium and is mutually exclusive with calmodulin binding. The binding to the cytoplasmic N-terminal domain is calcium independent but is essential for the channel modulation. Interacts (via C-terminal CDB motif) with CABP5; in a calcium-dependent manner. Interacts with CIB1; the interaction increases upon cardiomyocytes hypertrophy. Interacts with STAC2 and STAC3; this inhibits channel inactivation. Phosphorylation by PKA at Ser-1897 activates the channel. Elevated levels of blood glucose lead to increased phosphorylation by PKA. As to expression, detected in embryonic heart. Detected in retina in rod bipolar cells. Detected in tibialis artery (at protein level). Detected in smooth muscle cells from tibialis artery and in mesenteric artery. High expression in heart, followed by brain and spinal cord.

The protein localises to the cell membrane. It localises to the sarcolemma. The protein resides in the perikaryon. Its subcellular location is the postsynaptic density membrane. It is found in the cell projection. The protein localises to the dendrite. It localises to the T-tubule. The enzyme catalyses Ca(2+)(in) = Ca(2+)(out). Inhibited by dihydropyridines (DHP), such as isradipine. Inhibited by nifedipine. Channel activity is regulated by Ca(2+) and calmodulin. Binding of STAC1, STAC2 or STAC3 to a region that overlaps with the calmodulin binding site inhibits channel inactivation by Ca(2+) and calmodulin. Binding of calmodulin or CABP1 at the same regulatory sites results in opposite effects on the channel function. Shear stress and pressure increases calcium channel activity. In terms of biological role, pore-forming, alpha-1C subunit of the voltage-gated calcium channel that gives rise to L-type calcium currents. Mediates influx of calcium ions into the cytoplasm, and thereby triggers calcium release from the sarcoplasm. Plays an important role in excitation-contraction coupling in the heart. Required for normal heart development and normal regulation of heart rhythm. Required for normal contraction of smooth muscle cells in blood vessels and in the intestine. Essential for normal blood pressure regulation via its role in the contraction of arterial smooth muscle cells. Long-lasting (L-type) calcium channels belong to the 'high-voltage activated' (HVA) group. In Mus musculus (Mouse), this protein is Voltage-dependent L-type calcium channel subunit alpha-1C (Cacna1c).